Here is a 573-residue protein sequence, read N- to C-terminus: Putative 15-O-acetyltransferase SAT12 (573 aa).

The interval 1–40 (MLDDDCSPTSSSEMSNASSREASITSRSSSTSGNNSLPED) is disordered. Residues 7-36 (SPTSSSEMSNASSREASITSRSSSTSGNNS) show a composition bias toward low complexity.

It belongs to the trichothecene O-acetyltransferase family.

The protein operates within mycotoxin biosynthesis. In terms of biological role, putative 15-O-acetyltransferase; part of the satratoxin SC2 cluster involved in the biosynthesis of satratoxins, trichothecene mycotoxins that are associated with human food poisonings. Satratoxins are suggested to be made by products of multiple gene clusters (SC1, SC2 and SC3) that encode 21 proteins in all, including polyketide synthases, acetyltransferases, and other enzymes expected to modify the trichothecene skeleton. SC1 encodes 10 proteins, SAT1 to SAT10. The largest are SAT8, which encodes a putative polyketide synthase (PKS) with a conventional non-reducing architecture, and SAT10, a putative protein containing four ankyrin repeats and thus may be involved in protein scaffolding. The putative short-chain reductase SAT3 may assist the PKS in some capacity. SAT6 contains a secretory lipase domain and acts probably as a trichothecene esterase. SAT5 encodes a putative acetyltransferase, and so, with SAT6, may affect endogenous protection from toxicity. The probable transcription factor SAT9 may regulate the expression of the SC1 cluster. SC2 encodes proteins SAT11 to SAT16, the largest of which encodes the putative reducing PKS SAT13. SAT11 is a cytochrome P450 monooxygenase, while SAT14 and SAT16 are probable acetyltransferases. The SC2 cluster may be regulated by the transcription factor SAT15. SC3 is a small cluster that encodes 5 proteins, SAT17 to SAT21. SAT21 is a putative MFS-type transporter which may have a role in exporting secondary metabolites. The four other proteins putatively encoded in SC3 include the taurine hydroxylase-like protein SAT17, the O-methyltransferase SAT18, the acetyltransferase SAT19, and the Cys6-type zinc finger SAT20, the latter being probably involved in regulation of SC3 expression. In Stachybotrys chartarum (strain CBS 109288 / IBT 7711) (Toxic black mold), this protein is Putative 15-O-acetyltransferase SAT12.